Here is a 332-residue protein sequence, read N- to C-terminus: DNA repair and recombination protein RadA (332 aa).

126-133 (GEFGSGKT) contacts ATP.

The protein belongs to the eukaryotic RecA-like protein family.

Functionally, involved in DNA repair and in homologous recombination. Binds and assemble on single-stranded DNA to form a nucleoprotein filament. Hydrolyzes ATP in a ssDNA-dependent manner and promotes DNA strand exchange between homologous DNA molecules. The protein is DNA repair and recombination protein RadA of Pyrobaculum calidifontis (strain DSM 21063 / JCM 11548 / VA1).